The chain runs to 697 residues: Colicin-D (697 aa).

Positions 17–24 match the TonB box motif; that stretch reads HSMVVWPS.

It belongs to the cloacin colicin family.

Functionally, colicins are polypeptide toxins produced by and active against E.coli and closely related bacteria. In terms of biological role, colicin D inhibits protein synthesis. The sequence is that of Colicin-D (cda) from Escherichia coli.